Consider the following 410-residue polypeptide: Lissencephaly-1 homolog (410 aa).

The region spanning 7–39 (QRDELNRAIADYLRSNGYEEAYSTFKKEAELDN) is the LisH domain. The stretch at 32-82 (KKEAELDNNEELDKKYAGLLEKKWTSVIRLQKKVMELESKLNEAKEEITLG) forms a coiled coil. 7 WD repeats span residues 106–147 (GHRS…RTLK), 148–189 (GHTD…RTMH), 190–229 (GHDH…CVKT), 232–271 (GHRE…CKAE), 274–333 (EHEH…CLMT), 336–375 (GHDN…CMKT), and 378–410 (AHEH…WECR).

Belongs to the WD repeat LIS1/nudF family. In terms of assembly, can self-associate. Component of the cytosolic PAF-AH (I) heterotetrameric enzyme, which is composed of PAFAH1B1 (beta), PAFAH1B2 (alpha2) and PAFAH1B3 (alpha1) subunits. The catalytic activity of the enzyme resides in the alpha1 (PAFAH1B3) and alpha2 (PAFAH1B2) subunits, whereas the beta subunit (PAFAH1B1) has regulatory activity. Trimer formation is not essential for the catalytic activity. Interacts with dynein, dynactin, nde1 and ndel1.

The protein resides in the cytoplasm. Its subcellular location is the cytoskeleton. It localises to the microtubule organizing center. It is found in the centrosome. Functionally, regulatory subunit (beta subunit) of the cytosolic type I platelet-activating factor (PAF) acetylhydrolase (PAF-AH (I)), an enzyme that catalyzes the hydrolyze of the acetyl group at the sn-2 position of PAF and its analogs and participates in the PAF inactivation. Positively regulates the activity of the minus-end directed microtubule motor protein dynein. May enhance dynein-mediated microtubule sliding by targeting dynein to the microtubule plus end. Required for several dynein- and microtubule-dependent processes such as the maintenance of Golgi integrity, the peripheral transport of microtubule fragments and the coupling of the nucleus and centrosome. May be required for proliferation of neuronal precursors and neuronal migration. The protein is Lissencephaly-1 homolog (pafah1b1) of Tetraodon nigroviridis (Spotted green pufferfish).